Consider the following 259-residue polypeptide: Putative electron transfer flavoprotein subunit YgcR (259 aa).

Belongs to the ETF beta-subunit/FixA family. In terms of assembly, ygcQ and YgcR form a heterodimer.

Functionally, may play a role in a redox process. This chain is Putative electron transfer flavoprotein subunit YgcR (ygcR), found in Escherichia coli (strain K12).